Here is a 229-residue protein sequence, read N- to C-terminus: MLSGLIQRFEEEKMKHNQERVEELSLVRVDDTISQPPRYAPSAPMPSSMPTVALEILDKAMSNTTGATQTQKAEKAAFASYAEAFRDDVRLRQINRHVNEQIFPKLKSDLGGLKKKRAIIHMTLLVAAVVALLTSVCTLSSDMSVAFKLNGTSAEIPQWFKSLNPMLGVVNLGATFIMMVCAKSERGLNQQIDMIKKEVMKKQSYNDAVRMSFTEFSSVPLDGFELPLT.

The next 2 helical transmembrane spans lie at 119-139 (IIHM…VCTL) and 162-182 (SLNP…MVCA).

The protein belongs to the orbivirus NS3 family. In terms of assembly, forms homooligomers via coiled-coil motif. Interacts with host OPTN; this interaction inhibits innate immune response.

It is found in the host cell membrane. The protein localises to the host Golgi apparatus. In terms of biological role, plays a role in the inhibition of host innate immune response. Interacts with host OPTN and thus inhibits the recruitment of TBK1 to the host Golgi apparatus. In turn, downstream partner IRF3 cannot be activated and IFN-beta production is impaired. Functionally, facilitates viral particle release either by increasing plasma membrane permeability through a viroporin-like activity or by viral budding. The chain is Non-structural protein P8 (Segment-10) from Bluetongue virus 1 (isolate Australia) (BTV 1).